The sequence spans 457 residues: Transcription factor E2F3 (457 aa).

The segment at 80 to 171 (LLPSVPGTEP…PKSPSEKTRY (92 aa)) is disordered. Positions 93–102 (SLYTTPQGPS) are enriched in polar residues. A cyclin A/CDK2 binding region spans residues 96-145 (TTPQGPSSRVGLLQQPPAPGRGGGGGPPAKRRLELGESGHQYLSDGLKTP). The DNA-binding element occupies 147–237 (GKGRAALRSP…KNNVQWMGCS (91 aa)). Residues 155–164 (SPDSPKTPKS) are compositionally biased toward low complexity. A leucine-zipper region spans residues 196–217 (LNKAAEVLKVQKRRIYDITNVL). Positions 201–237 (EVLKVQKRRIYDITNVLEGIHLIKKKSKNNVQWMGCS) match the DEF box motif. Residues 238–329 (LSEDGGMLAQ…VPDSIESLQI (92 aa)) are dimerization. A disordered region spans residues 350–387 (HRPMKTNNQDHNGNIPKPTSKDLASNNSGHSDCSVSTA). The span at 371-387 (DLASNNSGHSDCSVSTA) shows a compositional bias: polar residues. The tract at residues 383–457 (SVSTANLSPL…LPLVEDFMCS (75 aa)) is transactivation. A retinoblastoma protein binding region spans residues 424–441 (EDYLLSLGEEEGISDLFD).

It belongs to the E2F/DP family. As to quaternary structure, component of the DRTF1/E2F transcription factor complex. Binds cooperatively with TFDP1/Dp-1 to E2F sites. Interacts with retinoblastoma protein RB1 and related proteins (such as RBL1) that inhibit the E2F transactivation domain. Binds EAPP.

The protein localises to the nucleus. In terms of biological role, transcription activator that binds DNA cooperatively with DP proteins through the E2 recognition site, 5'-TTTC[CG]CGC-3' found in the promoter region of a number of genes whose products are involved in cell cycle regulation or in DNA replication. The DRTF1/E2F complex functions in the control of cell-cycle progression from G1 to S phase. E2F3 binds specifically to RB1 in a cell-cycle dependent manner. Inhibits adipogenesis, probably through the repression of CEBPA binding to its target gene promoters. The sequence is that of Transcription factor E2F3 (E2f3) from Mus musculus (Mouse).